The chain runs to 111 residues: Cell cycle protein GpsB (111 aa).

A coiled-coil region spans residues 38 to 72; that stretch reads IKDYEAFHKEFDQLKQQNARLKRELEEQKVAATQV.

Belongs to the GpsB family. Forms polymers through the coiled coil domains. Interacts with PBP1, MreC and EzrA.

The protein localises to the cytoplasm. Divisome component that associates with the complex late in its assembly, after the Z-ring is formed, and is dependent on DivIC and PBP2B for its recruitment to the divisome. Together with EzrA, is a key component of the system that regulates PBP1 localization during cell cycle progression. Its main role could be the removal of PBP1 from the cell pole after pole maturation is completed. Also contributes to the recruitment of PBP1 to the division complex. Not essential for septum formation. This Bacillus mycoides (strain KBAB4) (Bacillus weihenstephanensis) protein is Cell cycle protein GpsB.